Reading from the N-terminus, the 455-residue chain is mRNA cleavage and polyadenylation factor CLP1 (455 aa).

The ATP site is built by E28 and K67. The segment at 112 to 131 (EAAARNNGGGRSAPHGPRVL) is disordered. 137–142 (GCGRTS) contributes to the ATP binding site.

This sequence belongs to the Clp1 family. Clp1 subfamily. As to quaternary structure, component of a pre-mRNA cleavage factor complex. Interacts directly with PCF11.

The protein resides in the nucleus. In terms of biological role, required for endonucleolytic cleavage during polyadenylation-dependent pre-mRNA 3'-end formation. The protein is mRNA cleavage and polyadenylation factor CLP1 of Pyricularia oryzae (strain 70-15 / ATCC MYA-4617 / FGSC 8958) (Rice blast fungus).